The chain runs to 271 residues: Endonuclease V (271 aa).

Positions 46 to 67 (TRTGDAPDVDQTTLSTSADDRT) are disordered. Mg(2+) contacts are provided by D76 and D140.

It belongs to the endonuclease V family. Requires Mg(2+) as cofactor.

The protein resides in the cytoplasm. The enzyme catalyses Endonucleolytic cleavage at apurinic or apyrimidinic sites to products with a 5'-phosphate.. Functionally, DNA repair enzyme involved in the repair of deaminated bases. Selectively cleaves double-stranded DNA at the second phosphodiester bond 3' to a deoxyinosine leaving behind the intact lesion on the nicked DNA. The chain is Endonuclease V from Haloarcula marismortui (strain ATCC 43049 / DSM 3752 / JCM 8966 / VKM B-1809) (Halobacterium marismortui).